The following is a 213-amino-acid chain: MSERFSPEQQQLLALAAVFEAAQLADDVAQRGDCDSQAFEALIAGVMELDADNFDGVYSQPGLLREGVSLLSRSLSKDSRGANLRPLNYGLALLHLAGKLRNNEDTVSILRNRLLALSGQQAHFDRFSDDAFCHRIAGIYLDTLGTFRFRIQVKGEPAHLQDDNKAARIRALFLAGVRAAFLWHQLGGRRWHLLFQRKRLISVIESIDINGLR.

The protein belongs to the HflD family.

The protein resides in the cytoplasm. The protein localises to the cell inner membrane. This Alcanivorax borkumensis (strain ATCC 700651 / DSM 11573 / NCIMB 13689 / SK2) protein is High frequency lysogenization protein HflD homolog.